The chain runs to 456 residues: Dolichyl-diphosphooligosaccharide--protein glycosyltransferase 48 kDa subunit (456 aa).

The N-terminal stretch at 1-42 (MGYFRCARAGSFGRRRKMEPSTAARAWALFWLLLPLLGAVCA) is a signal peptide. The Lumenal segment spans residues 43-427 (SGPRTLVLLD…YERFIPSAYP (385 aa)). Residues 428 to 447 (YYASAFSMMLGLFIFSIVFL) form a helical membrane-spanning segment. Topologically, residues 448–456 (HMKEKEKSD) are cytoplasmic.

This sequence belongs to the DDOST 48 kDa subunit family. In terms of assembly, component of the oligosaccharyltransferase (OST) complex. OST exists in two different complex forms which contain common core subunits RPN1, RPN2, OST48, OST4, DAD1 and TMEM258, either STT3A or STT3B as catalytic subunits, and form-specific accessory subunits. STT3A complex assembly occurs through the formation of 3 subcomplexes. Subcomplex 1 contains RPN1 and TMEM258, subcomplex 2 contains the STT3A-specific subunits STT3A, DC2/OSTC, and KCP2 as well as the core subunit OST4, and subcomplex 3 contains RPN2, DAD1, and OST48. The STT3A complex can form stable complexes with the Sec61 complex or with both the Sec61 and TRAP complexes. Interacts with SMIM22.

It localises to the endoplasmic reticulum membrane. The protein operates within protein modification; protein glycosylation. Functionally, subunit of the oligosaccharyl transferase (OST) complex that catalyzes the initial transfer of a defined glycan (Glc(3)Man(9)GlcNAc(2) in eukaryotes) from the lipid carrier dolichol-pyrophosphate to an asparagine residue within an Asn-X-Ser/Thr consensus motif in nascent polypeptide chains, the first step in protein N-glycosylation. N-glycosylation occurs cotranslationally and the complex associates with the Sec61 complex at the channel-forming translocon complex that mediates protein translocation across the endoplasmic reticulum (ER). All subunits are required for a maximal enzyme activity. Required for the assembly of both SST3A- and SS3B-containing OST complexes. This is Dolichyl-diphosphooligosaccharide--protein glycosyltransferase 48 kDa subunit from Homo sapiens (Human).